Reading from the N-terminus, the 401-residue chain is 8-amino-7-oxononanoate synthase (401 aa).

Arginine 24 is a binding site for substrate. 111 to 112 (GF) is a pyridoxal 5'-phosphate binding site. Histidine 137 serves as a coordination point for substrate. Residues serine 183, histidine 211, and threonine 240 each contribute to the pyridoxal 5'-phosphate site. An N6-(pyridoxal phosphate)lysine modification is found at lysine 243. Threonine 357 contributes to the substrate binding site.

Belongs to the class-II pyridoxal-phosphate-dependent aminotransferase family. BioF subfamily. As to quaternary structure, homodimer. It depends on pyridoxal 5'-phosphate as a cofactor.

The enzyme catalyses 6-carboxyhexanoyl-[ACP] + L-alanine + H(+) = (8S)-8-amino-7-oxononanoate + holo-[ACP] + CO2. It functions in the pathway cofactor biosynthesis; biotin biosynthesis. Its function is as follows. Catalyzes the decarboxylative condensation of pimeloyl-[acyl-carrier protein] and L-alanine to produce 8-amino-7-oxononanoate (AON), [acyl-carrier protein], and carbon dioxide. The protein is 8-amino-7-oxononanoate synthase of Xylella fastidiosa (strain M23).